Here is a 174-residue protein sequence, read N- to C-terminus: Cytochrome c-type biogenesis protein CcmE (174 aa).

The Cytoplasmic segment spans residues 1–8; the sequence is MNPRRKSR. A helical; Signal-anchor for type II membrane protein transmembrane segment spans residues 9-29; sequence LSVVLFILLGISVASALVLYA. The Periplasmic segment spans residues 30 to 174; that stretch reads LRQNIDLFYT…QEKQFKEGNQ (145 aa). Residues His131 and Tyr135 each contribute to the heme site. A disordered region spans residues 149–174; it reads KPMGISDLKNESDRDRQEKQFKEGNQ. Residues 156–174 show a composition bias toward basic and acidic residues; the sequence is LKNESDRDRQEKQFKEGNQ.

The protein belongs to the CcmE/CycJ family.

It is found in the cell inner membrane. In terms of biological role, heme chaperone required for the biogenesis of c-type cytochromes. Transiently binds heme delivered by CcmC and transfers the heme to apo-cytochromes in a process facilitated by CcmF and CcmH. This Histophilus somni (strain 2336) (Haemophilus somnus) protein is Cytochrome c-type biogenesis protein CcmE.